Reading from the N-terminus, the 339-residue chain is Adenosine deaminase (339 aa).

Residues histidine 15 and histidine 17 each coordinate Zn(2+). Residues histidine 17, aspartate 19, and glycine 172 each coordinate substrate. A Zn(2+)-binding site is contributed by histidine 199. Glutamate 202 serves as the catalytic Proton donor. Position 279 (aspartate 279) interacts with Zn(2+).

It belongs to the metallo-dependent hydrolases superfamily. Adenosine and AMP deaminases family. Adenosine deaminase subfamily. It depends on Zn(2+) as a cofactor.

It carries out the reaction adenosine + H2O + H(+) = inosine + NH4(+). It catalyses the reaction 2'-deoxyadenosine + H2O + H(+) = 2'-deoxyinosine + NH4(+). Catalyzes the hydrolytic deamination of adenosine and 2-deoxyadenosine. The protein is Adenosine deaminase of Lacticaseibacillus paracasei (strain ATCC 334 / BCRC 17002 / CCUG 31169 / CIP 107868 / KCTC 3260 / NRRL B-441) (Lactobacillus paracasei).